Here is a 274-residue protein sequence, read N- to C-terminus: Putative hydro-lyase SAV_6940 (274 aa).

The protein belongs to the D-glutamate cyclase family.

This Streptomyces avermitilis (strain ATCC 31267 / DSM 46492 / JCM 5070 / NBRC 14893 / NCIMB 12804 / NRRL 8165 / MA-4680) protein is Putative hydro-lyase SAV_6940.